A 581-amino-acid polypeptide reads, in one-letter code: Proline--tRNA ligase (581 aa).

It belongs to the class-II aminoacyl-tRNA synthetase family. ProS type 1 subfamily. Homodimer.

It localises to the cytoplasm. It catalyses the reaction tRNA(Pro) + L-proline + ATP = L-prolyl-tRNA(Pro) + AMP + diphosphate. Its function is as follows. Catalyzes the attachment of proline to tRNA(Pro) in a two-step reaction: proline is first activated by ATP to form Pro-AMP and then transferred to the acceptor end of tRNA(Pro). As ProRS can inadvertently accommodate and process non-cognate amino acids such as alanine and cysteine, to avoid such errors it has two additional distinct editing activities against alanine. One activity is designated as 'pretransfer' editing and involves the tRNA(Pro)-independent hydrolysis of activated Ala-AMP. The other activity is designated 'posttransfer' editing and involves deacylation of mischarged Ala-tRNA(Pro). The misacylated Cys-tRNA(Pro) is not edited by ProRS. This chain is Proline--tRNA ligase, found in Leptothrix cholodnii (strain ATCC 51168 / LMG 8142 / SP-6) (Leptothrix discophora (strain SP-6)).